The following is a 179-amino-acid chain: Large ribosomal subunit protein uL5 (179 aa).

Belongs to the universal ribosomal protein uL5 family. Part of the 50S ribosomal subunit; part of the 5S rRNA/L5/L18/L25 subcomplex. Contacts the 5S rRNA and the P site tRNA. Forms a bridge to the 30S subunit in the 70S ribosome.

In terms of biological role, this is one of the proteins that bind and probably mediate the attachment of the 5S RNA into the large ribosomal subunit, where it forms part of the central protuberance. In the 70S ribosome it contacts protein S13 of the 30S subunit (bridge B1b), connecting the 2 subunits; this bridge is implicated in subunit movement. Contacts the P site tRNA; the 5S rRNA and some of its associated proteins might help stabilize positioning of ribosome-bound tRNAs. The sequence is that of Large ribosomal subunit protein uL5 from Synechococcus sp. (strain CC9311).